A 517-amino-acid chain; its full sequence is Aldehyde dehydrogenase X, mitochondrial (517 aa).

The transit peptide at 1-17 (MLRFLAPRLLSLQGRTA) directs the protein to the mitochondrion. Lys-51 carries the N6-acetyllysine modification. Lys-52 carries the post-translational modification N6-acetyllysine; alternate. Lys-52 is modified (N6-succinyllysine; alternate). Lys-81 bears the N6-succinyllysine mark. An NAD(+)-binding site is contributed by 262–267 (GSTEVG). The active-site Proton acceptor is the Glu-285. The active-site Nucleophile is the Cys-319. An N6-acetyllysine; alternate mark is found at Lys-364, Lys-383, Lys-399, Lys-414, and Lys-426. An N6-succinyllysine; alternate mark is found at Lys-364, Lys-383, Lys-399, Lys-414, and Lys-426. N6-acetyllysine is present on Lys-429.

Belongs to the aldehyde dehydrogenase family. Homotetramer. As to expression, liver, testis and to a lesser extent in brain.

It is found in the mitochondrion matrix. The enzyme catalyses an aldehyde + NAD(+) + H2O = a carboxylate + NADH + 2 H(+). It functions in the pathway alcohol metabolism; ethanol degradation; acetate from ethanol: step 2/2. ALDHs play a major role in the detoxification of alcohol-derived acetaldehyde. They are involved in the metabolism of corticosteroids, biogenic amines, neurotransmitters, and lipid peroxidation. The sequence is that of Aldehyde dehydrogenase X, mitochondrial (ALDH1B1) from Homo sapiens (Human).